The sequence spans 1209 residues: Phospholipid-transporting ATPase ID (1209 aa).

Residues 1 to 68 are Cytoplasmic-facing; the sequence is MTVPKEIPEK…NIVTFLPVNL (68 aa). The disordered stretch occupies residues 12–36; the sequence is ARAGAPPSWSQKKPSWGTEEERRAR. The helical transmembrane segment at 69 to 89 threads the bilayer; that stretch reads FEQFQEVANTYFLFLLILQLI. Residues 90–91 are Exoplasmic loop-facing; the sequence is PQ. A helical transmembrane segment spans residues 92-112; sequence ISSLSWFTTIVPLVLVLTITA. Over 113-295 the chain is Cytoplasmic; that stretch reads VKDATDDYFR…TSIDRLMNTL (183 aa). A helical membrane pass occupies residues 296–316; sequence VLWIFGFLVCMGVILAIGNAI. Residues 317–338 lie on the Exoplasmic loop side of the membrane; it reads WEHEVGTRFQVYLPWDEAVDSA. Residues 339–359 form a helical membrane-spanning segment; it reads FFSGFLSFWSYIIILNTVVPI. Topologically, residues 360 to 898 are cytoplasmic; sequence SLYVSVEVIR…KFLCYFFYKN (539 aa). The 4-aspartylphosphate intermediate role is filled by D411. 12 residues coordinate ATP: D411, K412, T413, E515, F556, K579, R613, T693, G694, D695, R807, and K813. A Mg(2+)-binding site is contributed by D411. T413 contacts Mg(2+). Residue D833 participates in Mg(2+) binding. Positions 836 and 837 each coordinate ATP. D837 contacts Mg(2+). Residues 899–919 traverse the membrane as a helical segment; that stretch reads FAFTMVHFWFGFFCGFSAQTV. The Exoplasmic loop portion of the chain corresponds to 920–922; the sequence is YDQ. A helical transmembrane segment spans residues 923 to 943; that stretch reads YFITLYNIVYTSLPVLAMGVF. The Cytoplasmic segment spans residues 944 to 972; that stretch reads DQDVPEQRSMEYPKLYEPGQLNLLFNKRE. The helical transmembrane segment at 973–993 threads the bilayer; sequence FFICIAQGIYTSVLMFFIPYG. Residues 994–1011 are Exoplasmic loop-facing; that stretch reads VFAEATRDDGTQLADYQS. Residues 1012–1032 traverse the membrane as a helical segment; it reads FAVTVATSLVIVVSVQIGLDT. Over 1033-1036 the chain is Cytoplasmic; it reads GYWT. A helical transmembrane segment spans residues 1037 to 1057; that stretch reads AINHFFIWGSLAVYFAILFAM. Over 1058–1082 the chain is Exoplasmic loop; the sequence is HSNGLFDMFPNQFRFVGNAQNTLAQ. A helical transmembrane segment spans residues 1083–1103; the sequence is PTVWLTIALTTAVCIMPVVAF. Topologically, residues 1104–1209 are cytoplasmic; sequence RFLRLSLKPD…SGGAEKPLKG (106 aa). S1175 carries the phosphoserine modification. Positions 1179–1209 are disordered; sequence RSSSSWIESLRRKKSDSANSPSGGAEKPLKG.

It belongs to the cation transport ATPase (P-type) (TC 3.A.3) family. Type IV subfamily. As to quaternary structure, component of a P4-ATPase flippase complex which consists of a catalytic alpha subunit ATP8B2 and an accessory beta subunit TMEM30A or TMEM30B. The cofactor is Mg(2+). As to expression, expressed in brain and testes (at protein level).

It is found in the cell membrane. The protein resides in the endoplasmic reticulum membrane. It catalyses the reaction ATP + H2O + phospholipidSide 1 = ADP + phosphate + phospholipidSide 2.. The catalysed reaction is a 1,2-diacyl-sn-glycero-3-phosphocholine(out) + ATP + H2O = a 1,2-diacyl-sn-glycero-3-phosphocholine(in) + ADP + phosphate + H(+). Its function is as follows. Catalytic component of P4-ATPase flippase complex, which catalyzes the hydrolysis of ATP coupled to the transport of phosphatidylcholine (PC) from the outer to the inner leaflet of the plasma membrane. May contribute to the maintenance of membrane lipid asymmetry. The protein is Phospholipid-transporting ATPase ID of Mus musculus (Mouse).